Reading from the N-terminus, the 96-residue chain is Small ribosomal subunit protein bS20 (96 aa).

This sequence belongs to the bacterial ribosomal protein bS20 family.

Its function is as follows. Binds directly to 16S ribosomal RNA. The sequence is that of Small ribosomal subunit protein bS20 from Anaplasma phagocytophilum (strain HZ).